The sequence spans 98 residues: NADH-ubiquinone oxidoreductase chain 4L (98 aa).

3 consecutive transmembrane segments (helical) span residues 1–21, 29–49, and 59–79; these read MLPI…GVLI, TLLC…LMIT, and IPLI…ALLV.

The protein belongs to the complex I subunit 4L family. Core subunit of respiratory chain NADH dehydrogenase (Complex I) which is composed of 45 different subunits.

It localises to the mitochondrion inner membrane. The catalysed reaction is a ubiquinone + NADH + 5 H(+)(in) = a ubiquinol + NAD(+) + 4 H(+)(out). Core subunit of the mitochondrial membrane respiratory chain NADH dehydrogenase (Complex I) which catalyzes electron transfer from NADH through the respiratory chain, using ubiquinone as an electron acceptor. Part of the enzyme membrane arm which is embedded in the lipid bilayer and involved in proton translocation. The sequence is that of NADH-ubiquinone oxidoreductase chain 4L (MT-ND4L) from Phascogale tapoatafa (Common wambenger).